Reading from the N-terminus, the 92-residue chain is Large ribosomal subunit protein bL27 (92 aa).

Positions 1–26 (MAHKKGASSSSNGRDSESKRLGVKRF) are disordered.

The protein belongs to the bacterial ribosomal protein bL27 family.

The chain is Large ribosomal subunit protein bL27 from Corynebacterium aurimucosum (strain ATCC 700975 / DSM 44827 / CIP 107346 / CN-1) (Corynebacterium nigricans).